We begin with the raw amino-acid sequence, 246 residues long: Proteolipid protein DM gamma (246 aa).

4 helical membrane passes run 19–35 (LLATILCFSGVALFCGC), 71–87 (VIYGVASFSFLYGIILL), 118–134 (VFLTYLLGIAWLGVFGF), and 206–222 (FIVACAGAGATVIALLI).

This sequence belongs to the myelin proteolipid protein family. In terms of tissue distribution, highly expressed in white matter in myelinating shark brain.

Its subcellular location is the membrane. This is Proteolipid protein DM gamma from Squalus acanthias (Spiny dogfish).